A 60-amino-acid polypeptide reads, in one-letter code: Large ribosomal subunit protein uL30 (60 aa).

It belongs to the universal ribosomal protein uL30 family. As to quaternary structure, part of the 50S ribosomal subunit.

The sequence is that of Large ribosomal subunit protein uL30 from Mycobacteroides abscessus (strain ATCC 19977 / DSM 44196 / CCUG 20993 / CIP 104536 / JCM 13569 / NCTC 13031 / TMC 1543 / L948) (Mycobacterium abscessus).